A 374-amino-acid chain; its full sequence is Regulator of G-protein signaling 20 (374 aa).

Positions 1–11 are enriched in polar residues; that stretch reads MPRLSQDNQQG. 2 disordered regions span residues 1 to 21 and 135 to 158; these read MPRLSQDNQQGHQKHFSRPSR and PPGGRLPREVDASAGQSSSIPPMG. Residues 12–21 show a composition bias toward basic residues; it reads HQKHFSRPSR. An RGS domain is found at 248-364; the sequence is SFDKLMLTPA…MNSALYKDLL (117 aa).

In terms of assembly, forms a complex with G(alpha)z/i2 subunits and mu-opioid receptors; the formation of this complex results in mu-opioid receptor desensitization. Interacts with OPRM1. Post-translationally, fatty acylated. Heavily palmitoylated in the cysteine string motif. N- and O-glycosylated in synapsomal membranes. In terms of processing, serine phosphorylated in synapsomal membranes. Post-translationally, sumoylated with SUMO1 and SUMO2 in synaptosomes. The sumoylated forms act as a scaffold for sequestering mu-opioid receptor-activated G(alpha) subunits. Retinal-specific. Expressed throughout the retina, including photoreceptors.

It localises to the membrane. Its subcellular location is the nucleus. It is found in the cytoplasm. In terms of biological role, inhibits signal transduction by increasing the GTPase activity of G protein alpha subunits thereby driving them into their inactive GDP-bound form. Binds selectively to G(z)-alpha and G(alpha)-i2 subunits, accelerates their GTPase activity and regulates their signaling activities. The G(z)-alpha activity is inhibited by the phosphorylation and palmitoylation of the G-protein. Negatively regulates mu-opioid receptor-mediated activation of the G-proteins. This is Regulator of G-protein signaling 20 (RGS20) from Bos taurus (Bovine).